A 207-amino-acid chain; its full sequence is Large ribosomal subunit protein uL4 (207 aa).

The interval 48-89 is disordered; the sequence is SHKVKNRSEVRGGGRKPWRQKGTGRARQGSIRSPQWRGGGVV. Basic residues predominate over residues 60–71; that stretch reads GGRKPWRQKGTG.

The protein belongs to the universal ribosomal protein uL4 family. Part of the 50S ribosomal subunit.

One of the primary rRNA binding proteins, this protein initially binds near the 5'-end of the 23S rRNA. It is important during the early stages of 50S assembly. It makes multiple contacts with different domains of the 23S rRNA in the assembled 50S subunit and ribosome. Functionally, forms part of the polypeptide exit tunnel. In Bacillus velezensis (strain DSM 23117 / BGSC 10A6 / LMG 26770 / FZB42) (Bacillus amyloliquefaciens subsp. plantarum), this protein is Large ribosomal subunit protein uL4.